A 258-amino-acid chain; its full sequence is Myogenic factor 5 (258 aa).

The tract at residues 21 to 50 (LSSPEGEFPEDFEPRELPPFGAPAPTEPAC) is disordered. The bHLH domain maps to 85–136 (DRRKAATMRERRRLKKVNQAFETLKRCTTANPNQRLPKVEILRNAIRYIESL). The segment at 220–258 (AEEPGLPLRHAGSLSPGASIDSGPGTPGSPPPRRTYQAL) is disordered.

Efficient DNA binding requires dimerization with another bHLH protein.

It localises to the nucleus. Acts as a transcriptional activator that promotes transcription of muscle-specific target genes and plays a role in muscle differentiation. Induces fibroblasts to differentiate into myoblasts. Probable sequence specific DNA-binding protein. The sequence is that of Myogenic factor 5 (MYF5) from Gallus gallus (Chicken).